The chain runs to 221 residues: Small ribosomal subunit protein uS3 (221 aa).

A KH type-2 domain is found at 39-107; sequence IRNYIKEKLY…TVILNIIEVK (69 aa).

This sequence belongs to the universal ribosomal protein uS3 family. In terms of assembly, part of the 30S ribosomal subunit. Forms a tight complex with proteins S10 and S14.

Functionally, binds the lower part of the 30S subunit head. Binds mRNA in the 70S ribosome, positioning it for translation. The polypeptide is Small ribosomal subunit protein uS3 (Caldanaerobacter subterraneus subsp. tengcongensis (strain DSM 15242 / JCM 11007 / NBRC 100824 / MB4) (Thermoanaerobacter tengcongensis)).